We begin with the raw amino-acid sequence, 380 residues long: MLIVADENIPLIEEFFAGFGEIRRFPGRAIDRATVEQADVLLVRSVTQVDRQLLEGSPVRFVGTCTIGTDHLDLEHFQQAGITWSSAPGCNARGVVDYVLGSLLTLAEIEGVDLAQRCYGVVGAGEVGGRLIEVLRGLGWNVLVCDPQRQAAEGGDYVSLEQLLERCDVISLHTPLTKSGQDSTWHLLDRQRLNRLRHGTWLINAARGPVVDNRALAEVLRQREDLQAVLDVWEEEPTVDASLADLCVLATPHIAGYSLDGKQRGTAQIYQAYCRFLGQAEQVSLSALLPAPWVPQVSLNANADPAWALAMICRAVYDPRRDDADFRRSLSDDVAQQRSAFDGLRKHYPERREIDGLEVRIQGESAALSRIVRALGAREA.

Substrate contacts are provided by Ser45 and Thr66. NAD(+) is bound by residues Asp146 and Thr174. Residue Arg207 is part of the active site. Asp231 is an NAD(+) binding site. Glu236 is an active-site residue. Catalysis depends on His253, which acts as the Proton donor. An NAD(+)-binding site is contributed by Gly256. Tyr257 contacts substrate.

The protein belongs to the D-isomer specific 2-hydroxyacid dehydrogenase family. PdxB subfamily. Homodimer.

It localises to the cytoplasm. The enzyme catalyses 4-phospho-D-erythronate + NAD(+) = (R)-3-hydroxy-2-oxo-4-phosphooxybutanoate + NADH + H(+). It participates in cofactor biosynthesis; pyridoxine 5'-phosphate biosynthesis; pyridoxine 5'-phosphate from D-erythrose 4-phosphate: step 2/5. Catalyzes the oxidation of erythronate-4-phosphate to 3-hydroxy-2-oxo-4-phosphonooxybutanoate. This is Erythronate-4-phosphate dehydrogenase from Pseudomonas fluorescens (strain ATCC BAA-477 / NRRL B-23932 / Pf-5).